The primary structure comprises 470 residues: Neuraminidase (470 aa).

The Intravirion portion of the chain corresponds to 1-14; it reads MNPNQKIITIGSIS. The interval 11-32 is involved in apical transport and lipid raft association; it reads GSISLGLVVFNVLLHVVSIIVT. A helical membrane pass occupies residues 15–35; sequence LGLVVFNVLLHVVSIIVTVLI. The tract at residues 32 to 86 is hypervariable stalk region; sequence TVLILGKGENNGICNGTVVREYNETVRIERVTQWHNTNVVEYVPYWNGGTYMNNT. Topologically, residues 36–470 are virion surface; that stretch reads LGKGENNGIC…AILPFDIDKM (435 aa). Residues asparagine 46, asparagine 54, and asparagine 84 are each glycosylated (N-linked (GlcNAc...) asparagine; by host). The interval 89 to 470 is head of neuraminidase; it reads ICDVKGFAPF…AILPFDIDKM (382 aa). Intrachain disulfides connect cysteine 90/cysteine 417, cysteine 122/cysteine 127, cysteine 182/cysteine 229, cysteine 231/cysteine 236, cysteine 277/cysteine 290, cysteine 279/cysteine 288, cysteine 316/cysteine 335, and cysteine 421/cysteine 446. Arginine 116 serves as a coordination point for substrate. The N-linked (GlcNAc...) asparagine; by host glycan is linked to asparagine 144. Aspartate 149 (proton donor/acceptor) is an active-site residue. Residue arginine 150 coordinates substrate. A substrate-binding site is contributed by 275–276; it reads EE. A substrate-binding site is contributed by arginine 291. Residue aspartate 292 participates in Ca(2+) binding. Asparagine 293 carries an N-linked (GlcNAc...) asparagine; by host glycan. Ca(2+) contacts are provided by glycine 296 and aspartate 322. A substrate-binding site is contributed by arginine 368. An N-linked (GlcNAc...) asparagine; by host glycan is attached at asparagine 398. Tyrosine 402 serves as the catalytic Nucleophile.

Belongs to the glycosyl hydrolase 34 family. As to quaternary structure, homotetramer. Requires Ca(2+) as cofactor. In terms of processing, N-glycosylated.

It localises to the virion membrane. The protein localises to the host apical cell membrane. It catalyses the reaction Hydrolysis of alpha-(2-&gt;3)-, alpha-(2-&gt;6)-, alpha-(2-&gt;8)- glycosidic linkages of terminal sialic acid residues in oligosaccharides, glycoproteins, glycolipids, colominic acid and synthetic substrates.. With respect to regulation, inhibited by the neuraminidase inhibitors zanamivir (Relenza) and oseltamivir (Tamiflu). These drugs interfere with the release of progeny virus from infected cells and are effective against all influenza strains. Resistance to neuraminidase inhibitors is quite rare. Its function is as follows. Catalyzes the removal of terminal sialic acid residues from viral and cellular glycoconjugates. Cleaves off the terminal sialic acids on the glycosylated HA during virus budding to facilitate virus release. Additionally helps virus spread through the circulation by further removing sialic acids from the cell surface. These cleavages prevent self-aggregation and ensure the efficient spread of the progeny virus from cell to cell. Otherwise, infection would be limited to one round of replication. Described as a receptor-destroying enzyme because it cleaves a terminal sialic acid from the cellular receptors. May facilitate viral invasion of the upper airways by cleaving the sialic acid moieties on the mucin of the airway epithelial cells. Likely to plays a role in the budding process through its association with lipid rafts during intracellular transport. May additionally display a raft-association independent effect on budding. Plays a role in the determination of host range restriction on replication and virulence. Sialidase activity in late endosome/lysosome traffic seems to enhance virus replication. This chain is Neuraminidase, found in Influenza A virus (strain A/Turkey/Ireland/1378/1983 H5N8).